The following is a 275-amino-acid chain: MALKTFKPTTPGRRQLVLVDRSELWKGKPEKSLTEGLRSKGGRNNTGRVTVRWRGGGHKRRYRIIDFKRNKFDVAATVERLEYDPNRTAFIALVSYADGEKAYIIAPQRLAVGDQVIASEKADIKPGNAMPLKNIPVGTIVHNVELKVGKGGQLARSAGTYVQLVGKDQGYAQLRLASGELRMVRGECMATIGAVSNPDQQNVSLGKAGRAVWMGRRPSVRGVAMNPIDHPHGGGEGRTSGGRHPVTPWGKPTKGKKTRSNKKTDRLIMRRRQTQ.

A disordered region spans residues 225–275 (MNPIDHPHGGGEGRTSGGRHPVTPWGKPTKGKKTRSNKKTDRLIMRRRQTQ).

Belongs to the universal ribosomal protein uL2 family. Part of the 50S ribosomal subunit. Forms a bridge to the 30S subunit in the 70S ribosome.

Its function is as follows. One of the primary rRNA binding proteins. Required for association of the 30S and 50S subunits to form the 70S ribosome, for tRNA binding and peptide bond formation. It has been suggested to have peptidyltransferase activity; this is somewhat controversial. Makes several contacts with the 16S rRNA in the 70S ribosome. This chain is Large ribosomal subunit protein uL2, found in Paramagnetospirillum magneticum (strain ATCC 700264 / AMB-1) (Magnetospirillum magneticum).